The primary structure comprises 331 residues: UDP-GalNAc:beta-1,3-N-acetylgalactosaminyltransferase 1 (331 aa).

The Cytoplasmic portion of the chain corresponds to 1-20 (MAPAVLTALPNRMSLRSLKW). The chain crosses the membrane as a helical; Signal-anchor for type II membrane protein span at residues 21 to 43 (SLLLLSLLSFLVIWYLSLPHYNV). The Lumenal portion of the chain corresponds to 44-331 (IERVNWMYFY…VMLRNTTCHY (288 aa)). 5 N-linked (GlcNAc...) asparagine glycosylation sites follow: Asn72, Asn154, Asn198, Asn212, and Asn326.

Belongs to the glycosyltransferase 31 family. Mg(2+) serves as cofactor. Detected in brain, ovary, kidney, uterus and stomach. In ovary, specifically expressed in follicular granulosa cells and shows particularly strong expression at later stages of follicle development.

It is found in the golgi apparatus membrane. The catalysed reaction is a globoside Gb3Cer (d18:1(4E)) + UDP-N-acetyl-alpha-D-galactosamine = a globoside Gb4Cer (d18:1(4E)) + UDP + H(+). It functions in the pathway protein modification; protein glycosylation. Functionally, transfers N-acetylgalactosamine onto globotriaosylceramide. Plays a critical role in preimplantation stage embryonic development. The polypeptide is UDP-GalNAc:beta-1,3-N-acetylgalactosaminyltransferase 1 (Mus musculus (Mouse)).